The following is a 362-amino-acid chain: G-protein coupled receptor 4 (362 aa).

Over 1–8 the chain is Extracellular; that stretch reads MGNRTLEG. An N-linked (GlcNAc...) asparagine glycan is attached at N3. A helical membrane pass occupies residues 9 to 45; it reads CHVDSRMDHLFPPSLYIFVIGVGLPTNCLALWAAYRQ. 2 disulfide bridges follow: C9–C258 and C90–C168. At 46-49 the chain is on the cytoplasmic side; that stretch reads VRQR. Residues 50–80 form a helical membrane-spanning segment; the sequence is NELGVYLMNLSIADLLYICTLPLWVDYFLHH. Over 81 to 85 the chain is Extracellular; sequence DNWIH. Residues 86–121 form a helical membrane-spanning segment; it reads GPGSCKLFGFIFYTNIYISIAFLCCISVDRYLAVAH. Residues 122–129 are Cytoplasmic-facing; that stretch reads PLRFARLR. Residues 130–156 form a helical membrane-spanning segment; that stretch reads RVKTAVAVSSVVWATELGANSAPLFHD. At 157–172 the chain is on the extracellular side; it reads ELFRDRYNHTFCFEKF. The interval 157 to 172 is extracellular loop 2 (ECL2); sequence ELFRDRYNHTFCFEKF. An N-linked (GlcNAc...) asparagine glycan is attached at N164. A helical membrane pass occupies residues 173 to 210; it reads PMEGWVAWMNLYRVFVGFLFPWALMLLSYRGILRAVRG. The Cytoplasmic segment spans residues 211–214; sequence SVST. Residues 215–250 form a helical membrane-spanning segment; the sequence is ERQEKVKIKRLALSLIAIVLVCFAPYHVLLLSRSAV. The Extracellular segment spans residues 251-260; the sequence is YLRRPRDCGF. Residues 261–289 form a helical membrane-spanning segment; sequence EERVFSAYHSSLAFTSLNCVADPILYCLV. Topologically, residues 290–362 are cytoplasmic; it reads NEGARSDVAK…VQLKMLPPAQ (73 aa).

The protein belongs to the G-protein coupled receptor 1 family.

Its subcellular location is the cell membrane. Activated by a network of residues that connects an extracellular-facing cavity to Glu-145, a conserved charged residue buried in the transmembrane core of the receptor. Protonation likely drives conformational changes in extracellular loop 2 (ECL2), which stabilizes movement of transmembrane 3 (TM3) and a series of rearrangements that connect the extracellular-facing cavity to Glu-145, a residue only conserved in proton-sensing G-protein coupled receptors. Its function is as follows. Proton-sensing G-protein coupled receptor activated by extracellular pH, which is required to monitor pH changes and generate adaptive reactions. Activated by an optimal pH of 6.8-7.2. Ligand binding causes a conformation change that triggers signaling via guanine nucleotide-binding proteins (G proteins) and modulates the activity of downstream effectors, such as adenylate cyclase. GPR4 is mainly coupled to G(s) G proteins and mediates activation of adenylate cyclase activity. May also couple with G(q) and G(12)/G(13) G proteins. Acts as a key regulator of respiratory sensitivity to CO2/H(+) in brain retrotrapezoid nucleus neurons: acts by mediating detection of protons generated by the formation of carbonic acid in the blood, an important mechanism to impulse to breathe. Also acts as a regulator of acid secretion in the kidney collecting duct by maintaining acid-base homeostasis in the kidney. Acidosis-induced GPR4 activation increases paracellular gap formation and permeability of vascular endothelial cells, possibly through the G(12)/G(13)/Rho GTPase signaling pathway. The sequence is that of G-protein coupled receptor 4 (GPR4) from Bos taurus (Bovine).